The following is a 389-amino-acid chain: Lipid-A-disaccharide synthase (389 aa).

The protein belongs to the LpxB family.

It catalyses the reaction a lipid X + a UDP-2-N,3-O-bis[(3R)-3-hydroxyacyl]-alpha-D-glucosamine = a lipid A disaccharide + UDP + H(+). Its pathway is bacterial outer membrane biogenesis; LPS lipid A biosynthesis. Condensation of UDP-2,3-diacylglucosamine and 2,3-diacylglucosamine-1-phosphate to form lipid A disaccharide, a precursor of lipid A, a phosphorylated glycolipid that anchors the lipopolysaccharide to the outer membrane of the cell. This is Lipid-A-disaccharide synthase from Verminephrobacter eiseniae (strain EF01-2).